Here is a 588-residue protein sequence, read N- to C-terminus: Aspartate--tRNA ligase (588 aa).

Glutamate 174 is a binding site for L-aspartate. Residues 198-201 (QLFK) are aspartate. Position 220 (arginine 220) interacts with L-aspartate. ATP-binding positions include 220–222 (RDE) and glutamine 229. Histidine 448 contacts L-aspartate. Glutamate 482 contributes to the ATP binding site. Arginine 489 contributes to the L-aspartate binding site. 534–537 (GIDR) is a binding site for ATP.

Belongs to the class-II aminoacyl-tRNA synthetase family. Type 1 subfamily. In terms of assembly, homodimer.

Its subcellular location is the cytoplasm. It carries out the reaction tRNA(Asp) + L-aspartate + ATP = L-aspartyl-tRNA(Asp) + AMP + diphosphate. Functionally, catalyzes the attachment of L-aspartate to tRNA(Asp) in a two-step reaction: L-aspartate is first activated by ATP to form Asp-AMP and then transferred to the acceptor end of tRNA(Asp). This Xanthomonas euvesicatoria pv. vesicatoria (strain 85-10) (Xanthomonas campestris pv. vesicatoria) protein is Aspartate--tRNA ligase.